A 274-amino-acid polypeptide reads, in one-letter code: NADPH-dependent 7-cyano-7-deazaguanine reductase (274 aa).

80-82 contributes to the substrate binding site; sequence VES. 82–83 lines the NADPH pocket; the sequence is SK. The Thioimide intermediate role is filled by Cys-181. The Proton donor role is filled by Asp-188. 220 to 221 lines the substrate pocket; sequence HE. 249–250 is an NADPH binding site; sequence RG.

The protein belongs to the GTP cyclohydrolase I family. QueF type 2 subfamily. In terms of assembly, homodimer.

Its subcellular location is the cytoplasm. The enzyme catalyses 7-aminomethyl-7-carbaguanine + 2 NADP(+) = 7-cyano-7-deazaguanine + 2 NADPH + 3 H(+). It participates in tRNA modification; tRNA-queuosine biosynthesis. Catalyzes the NADPH-dependent reduction of 7-cyano-7-deazaguanine (preQ0) to 7-aminomethyl-7-deazaguanine (preQ1). This Burkholderia vietnamiensis (strain G4 / LMG 22486) (Burkholderia cepacia (strain R1808)) protein is NADPH-dependent 7-cyano-7-deazaguanine reductase.